The primary structure comprises 147 residues: Globin (147 aa).

Ser-2 is subject to N-acetylserine. One can recognise a Globin domain in the interval Ser-2–Lys-147. His-96 is a heme b binding site.

The protein belongs to the globin family. Monomer.

This chain is Globin, found in Aplysia limacina (Sea hare).